The chain runs to 588 residues: Ankyrin repeat and SOCS box protein 15 (588 aa).

11 ANK repeats span residues K75–W104, D110–T139, K143–Q172, K176–L205, F209–A238, D242–I271, A275–I304, S307–S336, E349–L378, D379–C408, and T416–M444. Positions W524–D579 constitute an SOCS box domain.

It belongs to the ankyrin SOCS box (ASB) family.

It functions in the pathway protein modification; protein ubiquitination. Functionally, may be a substrate-recognition component of a SCF-like ECS (Elongin-Cullin-SOCS-box protein) E3 ubiquitin-protein ligase complex which mediates the ubiquitination and subsequent proteasomal degradation of target proteins. The chain is Ankyrin repeat and SOCS box protein 15 (ASB15) from Bos taurus (Bovine).